Here is a 394-residue protein sequence, read N- to C-terminus: Ketoisovalerate oxidoreductase subunit VorA (394 aa).

Heterotetramer of one alpha, one beta, one delta and one gamma chain.

It carries out the reaction 3-methyl-2-oxobutanoate + 2 oxidized [2Fe-2S]-[ferredoxin] + CoA = 2-methylpropanoyl-CoA + 2 reduced [2Fe-2S]-[ferredoxin] + CO2 + H(+). This chain is Ketoisovalerate oxidoreductase subunit VorA (vorA), found in Pyrococcus horikoshii (strain ATCC 700860 / DSM 12428 / JCM 9974 / NBRC 100139 / OT-3).